We begin with the raw amino-acid sequence, 504 residues long: MEPVFLFLILAFPIASVYLLFYHKKRVVGLSAPPGPPGLPFIGNFHQLYKASSTHEYLWSLSKQYGSLVTLRMGSVPILVVSSPKMAKEVLQTQDLIYCSRPAMTGMQKLSYNGLDVAFSPYTDQWRHTRKFCTLELFTQKRAQLNFRPVREQEVSRMIARLSETAAASKDVNAYEWFSNLATCIISRVAFGKRYDEDGIGKERFQRMLSEIDAMFIGFFVSDFFPMFGWIDKLSGMRDRLDRTFKDLDMFYQELIDEHLKPNRLESPTEDLIDVMLKNEGSSLTKDSMKAILLNVFNGGTGTTATVLAWAMTALLRNQGVMKKAQEEIRSVIGKKGKVDEDDFPSLPYLRAVVKETMRLYPPAPVLVPRETMESSIIGEDKDHMYMVKPKTVVYISMWAIGRDPKTWKNPMEFVPERFLERPDINYKGQQFEYVPFGAGRRICAGINLGVTTVELALANLLYTFDWEPPAGMRFEDIDDETTNGLALQKKNALYIRPKKYMFP.

A helical transmembrane segment spans residues 1-21; it reads MEPVFLFLILAFPIASVYLLF. Residues 363–368 are substrate specificity; sequence PAPVLV. Cysteine 444 serves as a coordination point for heme.

It belongs to the cytochrome P450 family. Heme serves as cofactor.

It localises to the microsome membrane. The protein operates within secondary metabolite biosynthesis. Functionally, involved in the biosynthesis of coumarins and furanocoumarins (FCs), natural products required for defense responses against attacks by predators with potential medical and agroindustrial usages such as anticoagulant, rodenticide and artificial vanilla substitutes. Able to catalyze the hydroxylation of esculetin to produce 6,7,8-trihydroxycoumarin. The chain is 6,7,8-trihydroxycoumarin synthase from Pastinaca sativa (Wild parsnip).